The sequence spans 310 residues: MAGAVSAVDQPLKIITGADDFGASLKDAMVTHLRSLGIDVEDTGVSSYYSAGSEVGRRVSASSSSEVRGLVCCGTGVGVAMFANKFPGVYAATCLSVEDAVNARSISNCNVLAFSGIKTSPETALEIFDAWIKTPFKSPCPASGSEPWSSVISSFLDNSLSEMSQIGKSTAGDSTTKKIDETTASCVICCLAKNREFTPVDIMPGGSMKIVRETPTSAIVRFKAGSVEPAHHHTFGHDLVVIKGKKSVWNLSKKERADLVDGDYLFTPAGDVHRVKYHEDTEFFITWDGHWDIFLDEDLETAKKAIEEEA.

Ala-2 carries the N-acetylalanine modification. The Cupin type-2 domain occupies 219–282; that stretch reads IVRFKAGSVE…HRVKYHEDTE (64 aa).

In Arabidopsis thaliana (Mouse-ear cress), this protein is DNA damage-repair/toleration protein DRT102 (DRT102).